Reading from the N-terminus, the 207-residue chain is Putative threonylcarbamoyl-AMP synthase (207 aa).

The YrdC-like domain occupies 15 to 199; sequence EEERKKVLEF…KIISIREGVI (185 aa).

The protein belongs to the SUA5 family.

The protein localises to the cytoplasm. The catalysed reaction is L-threonine + hydrogencarbonate + ATP = L-threonylcarbamoyladenylate + diphosphate + H2O. Functionally, required for the formation of a threonylcarbamoyl group on adenosine at position 37 (t(6)A37) in tRNAs that read codons beginning with adenine. Catalyzes the conversion of L-threonine, HCO(3)(-)/CO(2) and ATP to give threonylcarbamoyl-AMP (TC-AMP) as the acyladenylate intermediate, with the release of diphosphate. The chain is Putative threonylcarbamoyl-AMP synthase from Methanocaldococcus jannaschii (strain ATCC 43067 / DSM 2661 / JAL-1 / JCM 10045 / NBRC 100440) (Methanococcus jannaschii).